Consider the following 265-residue polypeptide: Flap endonuclease Xni (265 aa).

Position 111 (D111) interacts with Mg(2+). The 5'-3' exonuclease domain maps to 167–260; sequence VVPAQLVDFW…NLREIRYPPA (94 aa). K(+) is bound by residues L178, V189, and I192. An interaction with DNA region spans residues 191 to 196; sequence GIGPKT.

It belongs to the Xni family. It depends on Mg(2+) as a cofactor. Requires K(+) as cofactor.

In terms of biological role, has flap endonuclease activity. During DNA replication, flap endonucleases cleave the 5'-overhanging flap structure that is generated by displacement synthesis when DNA polymerase encounters the 5'-end of a downstream Okazaki fragment. The chain is Flap endonuclease Xni from Aeromonas salmonicida (strain A449).